Reading from the N-terminus, the 81-residue chain is Short neurotoxin SN160 (81 aa).

A signal peptide spans 1 to 21 (MKTLLLTLVVVTIVCLDLGYT). 4 disulfide bridges follow: C24/C43, C38/C60, C62/C73, and C74/C79.

The protein belongs to the three-finger toxin family. Short-chain subfamily. Type I alpha-neurotoxin sub-subfamily. In terms of tissue distribution, expressed by the venom gland.

The protein resides in the secreted. Binds to muscle nicotinic acetylcholine receptor (nAChR) and inhibit acetylcholine from binding to the receptor, thereby impairing neuromuscular transmission. The chain is Short neurotoxin SN160 from Hydrophis hardwickii (Hardwick's spine-bellied seasnake).